Here is a 231-residue protein sequence, read N- to C-terminus: U1 small nuclear ribonucleoprotein C (231 aa).

The Matrin-type zinc finger occupies 4 to 36; that stretch reads YYCEYCHSYLTHDTLSVRKSHLVGKNHLRITAD. Basic residues predominate over residues 49-61; sequence HNHKRRHIGKRGR. Disordered stretches follow at residues 49–71, 137–177, and 205–231; these read HNHKRRHIGKRGRKERENSSQNE, PQRA…LEPP, and ESKKRMHSDGIRKPSSANGYKRRRYGN.

The protein belongs to the U1 small nuclear ribonucleoprotein C family. In terms of assembly, U1 snRNP is composed of the 7 core Sm proteins SMB1, SMD1, SMD2, SMD3, SME1, SMX3 and SMX2 (Sm proteins B, D1, D2, D3, E, F and G, respectively) that assemble in a heptameric protein ring on the Sm site of the small nuclear RNA to form the core snRNP, and at least 10 U1 snRNP-specific proteins SNP1/U1-70K, MUD1/U1-A, YHC1/U1-C, LUC7, NAM8, PRP39, PRP40, PRP42, SNU56 and SNU71. YHC1/U1-C interacts with U1 snRNA and the 5' splice-site region of the pre-mRNA.

Its subcellular location is the nucleus. Functionally, component of the spliceosomal U1 snRNP, which is essential for recognition of the pre-mRNA 5' splice-site and the subsequent assembly of the spliceosome. YHC1/U1-C is directly involved in initial 5' splice-site recognition for both constitutive and regulated alternative splicing. The interaction with the 5' splice-site seems to precede base-pairing between the pre-mRNA and the U1 snRNA. Stimulates commitment or early (E) complex formation by stabilizing the base pairing of the 5' end of the U1 snRNA and the 5' splice-site region. This is U1 small nuclear ribonucleoprotein C from Saccharomyces cerevisiae (strain ATCC 204508 / S288c) (Baker's yeast).